The sequence spans 237 residues: Ribosomal RNA small subunit methyltransferase G (237 aa).

The disordered stretch occupies residues 1-25 (MASRHSPQTAAQPDAADKAQALRLT). The span at 7-21 (PQTAAQPDAADKAQA) shows a compositional bias: low complexity. S-adenosyl-L-methionine-binding residues include Gly-85, Phe-90, and Arg-155.

This sequence belongs to the methyltransferase superfamily. RNA methyltransferase RsmG family.

The protein resides in the cytoplasm. It catalyses the reaction guanosine(527) in 16S rRNA + S-adenosyl-L-methionine = N(7)-methylguanosine(527) in 16S rRNA + S-adenosyl-L-homocysteine. Specifically methylates the N7 position of guanine in position 527 of 16S rRNA. The chain is Ribosomal RNA small subunit methyltransferase G from Rhodopseudomonas palustris (strain HaA2).